The following is a 452-amino-acid chain: MTPTTVVSAAALDAEPGLDAFGNDPWWIILIKALAVFVFLMLCVLMMIMADRKVMGRMQQRHGPNRFGPWGLLQSLADGVKLSLKEDLIPRTVDKVIYIAAPMIAAIPAFFAFSVIPVGPEVTMFGVETRLQLTDLPVAVLLVLATASLGVYGIVLAGWASRSPYPLLGGLRASAQVISYEIAMGLSFIAVFIYAGTLSTSGIVEAQQNIWFAVILFPSFVIYLITMIGETNRLPFDLPEGEGELVGGFMTEYSSMKFTMFFLAEYVNMVTVSAMSVTLFLGGYLAPPPITTFWPGANEGWWPALWWLIKFVCVMFLFVWVRGSLPRVRYDQLMKLGWKILIPIQLVWITAVAVIRVLNNQEYPGYVTAIVVGVFGLLVFLGLWAWSRAAAKAKAQEAAEHEAELRARRENPMYGGFPVPPMIAPHYGTSVLAEEPRYQPASAPKREEVSGA.

Transmembrane regions (helical) follow at residues 28-48 (IILI…LMMI), 96-116 (VIYI…FSVI), 136-156 (LPVA…GIVL), 177-197 (VISY…YAGT), 210-230 (IWFA…MIGE), 264-286 (AEYV…GYLA), 301-321 (WWPA…FVWV), 335-355 (KLGW…VAVI), and 366-386 (YVTA…LWAW).

The protein belongs to the complex I subunit 1 family. In terms of assembly, NDH-1 is composed of 14 different subunits. Subunits NuoA, H, J, K, L, M, N constitute the membrane sector of the complex.

The protein resides in the cell membrane. The enzyme catalyses a quinone + NADH + 5 H(+)(in) = a quinol + NAD(+) + 4 H(+)(out). In terms of biological role, NDH-1 shuttles electrons from NADH, via FMN and iron-sulfur (Fe-S) centers, to quinones in the respiratory chain. The immediate electron acceptor for the enzyme in this species is believed to be ubiquinone. Couples the redox reaction to proton translocation (for every two electrons transferred, four hydrogen ions are translocated across the cytoplasmic membrane), and thus conserves the redox energy in a proton gradient. This subunit may bind ubiquinone. The polypeptide is NADH-quinone oxidoreductase subunit H (Thermobifida fusca (strain YX)).